The sequence spans 179 residues: Large ribosomal subunit protein uL5 (179 aa).

Belongs to the universal ribosomal protein uL5 family. In terms of assembly, part of the 50S ribosomal subunit; part of the 5S rRNA/L5/L18/L25 subcomplex. Contacts the 5S rRNA and the P site tRNA. Forms a bridge to the 30S subunit in the 70S ribosome.

Its function is as follows. This is one of the proteins that bind and probably mediate the attachment of the 5S RNA into the large ribosomal subunit, where it forms part of the central protuberance. In the 70S ribosome it contacts protein S13 of the 30S subunit (bridge B1b), connecting the 2 subunits; this bridge is implicated in subunit movement. Contacts the P site tRNA; the 5S rRNA and some of its associated proteins might help stabilize positioning of ribosome-bound tRNAs. In Bacillus cereus (strain Q1), this protein is Large ribosomal subunit protein uL5.